The following is a 625-amino-acid chain: Mesothelin (625 aa).

The first 35 residues, 1–35 (MALPTARPLLGSCGSPICSRSFLLLLLSLGWIPRL), serve as a signal peptide directing secretion. An N-linked (GlcNAc...) asparagine glycan is attached at asparagine 93. Phosphoserine is present on serine 202. A disulfide bridge connects residues cysteine 304 and cysteine 328. N-linked (GlcNAc...) asparagine glycosylation is found at asparagine 390, asparagine 488, and asparagine 517. Serine 600 carries GPI-anchor amidated serine lipidation. Residues 601 to 625 (SRASLLGPGFVLIWIPALLPALRLS) constitute a propeptide, removed in mature form.

This sequence belongs to the mesothelin family. Interacts with MUC16. In terms of processing, proteolytically cleaved by a furin-like convertase to generate megakaryocyte-potentiating factor (MPF), and the cleaved form of mesothelin. In terms of tissue distribution, highly expressed in lung and heart. Expressed at low levels in spleen, liver, kidney and testis. Present in lung (at protein level).

It is found in the cell membrane. It localises to the golgi apparatus. The protein localises to the secreted. Functionally, membrane-anchored forms may play a role in cellular adhesion. Its function is as follows. Megakaryocyte-potentiating factor (MPF) may potentiate megakaryocyte colony formation. This Mus musculus (Mouse) protein is Mesothelin (Msln).